Here is a 181-residue protein sequence, read N- to C-terminus: MESGFKVTLKDAIRTIPDYPKPGVQFRDVTTLMGNAQAFRRAVDELVYPYAGNRIDKVAGIEARGFILGGAIAHQLSAGFVPIRKKGKLPRDTARIAYSLEYGVDEMEMHRDAIEKGERVVLVDDLIATGGTAEAAAKLLLQMGAEIVAACFIIDLPDLGGRKKLEALGLPVRTLVAFEGD.

The protein belongs to the purine/pyrimidine phosphoribosyltransferase family. As to quaternary structure, homodimer.

The protein resides in the cytoplasm. The catalysed reaction is AMP + diphosphate = 5-phospho-alpha-D-ribose 1-diphosphate + adenine. Its pathway is purine metabolism; AMP biosynthesis via salvage pathway; AMP from adenine: step 1/1. Functionally, catalyzes a salvage reaction resulting in the formation of AMP, that is energically less costly than de novo synthesis. The chain is Adenine phosphoribosyltransferase from Brucella suis (strain ATCC 23445 / NCTC 10510).